The sequence spans 421 residues: Core protease I7 homolog (421 aa).

Residues H242, D249, and C329 contribute to the active site.

This sequence belongs to the peptidase C57 family.

It is found in the virion. Late protein responsible for processing most or all of the viral core and membrane proteins known to undergo morphogenesis-associated proteolysis. These proteolytic events are involved in the transformation of immature virions (IV) into mature virions (MV). The protein is Core protease I7 homolog of Fowlpox virus (strain NVSL) (FPV).